The sequence spans 264 residues: 3-methyl-2-oxobutanoate hydroxymethyltransferase (264 aa).

Residues Asp45 and Asp84 each coordinate Mg(2+). 3-methyl-2-oxobutanoate-binding positions include 45–46 (DS), Asp84, and Lys112. Glu114 serves as a coordination point for Mg(2+). Glu181 serves as the catalytic Proton acceptor.

Belongs to the PanB family. Homodecamer; pentamer of dimers. Mg(2+) is required as a cofactor.

It is found in the cytoplasm. It catalyses the reaction 3-methyl-2-oxobutanoate + (6R)-5,10-methylene-5,6,7,8-tetrahydrofolate + H2O = 2-dehydropantoate + (6S)-5,6,7,8-tetrahydrofolate. Its pathway is cofactor biosynthesis; (R)-pantothenate biosynthesis; (R)-pantoate from 3-methyl-2-oxobutanoate: step 1/2. In terms of biological role, catalyzes the reversible reaction in which hydroxymethyl group from 5,10-methylenetetrahydrofolate is transferred onto alpha-ketoisovalerate to form ketopantoate. In Aliivibrio fischeri (strain MJ11) (Vibrio fischeri), this protein is 3-methyl-2-oxobutanoate hydroxymethyltransferase.